The sequence spans 69 residues: Neurotoxin Cex7 (69 aa).

A signal peptide is located at residue alanine 1. The LCN-type CS-alpha/beta domain occupies 2–67 (REGYLVSKST…TYPIPGKSCG (66 aa)). Cystine bridges form between cysteine 13/cysteine 66, cysteine 17/cysteine 42, cysteine 26/cysteine 47, and cysteine 30/cysteine 49. A Cysteine amide modification is found at cysteine 66. A propeptide spanning residues 67–69 (GKK) is cleaved from the precursor.

It belongs to the long (4 C-C) scorpion toxin superfamily. Sodium channel inhibitor family. Beta subfamily. In terms of tissue distribution, expressed by the venom gland.

It is found in the secreted. Its function is as follows. Beta toxins bind voltage-independently at site-4 of sodium channels (Nav) and shift the voltage of activation toward more negative potentials thereby affecting sodium channel activation and promoting spontaneous and repetitive firing. This Centruroides exilicauda (Bark scorpion) protein is Neurotoxin Cex7.